A 340-amino-acid polypeptide reads, in one-letter code: Phosphoribosylformylglycinamidine cyclo-ligase (340 aa).

It belongs to the AIR synthase family.

The protein localises to the cytoplasm. It catalyses the reaction 2-formamido-N(1)-(5-O-phospho-beta-D-ribosyl)acetamidine + ATP = 5-amino-1-(5-phospho-beta-D-ribosyl)imidazole + ADP + phosphate + H(+). It participates in purine metabolism; IMP biosynthesis via de novo pathway; 5-amino-1-(5-phospho-D-ribosyl)imidazole from N(2)-formyl-N(1)-(5-phospho-D-ribosyl)glycinamide: step 2/2. This Streptococcus pyogenes serotype M6 (strain ATCC BAA-946 / MGAS10394) protein is Phosphoribosylformylglycinamidine cyclo-ligase.